Here is a 983-residue protein sequence, read N- to C-terminus: Protein translocase subunit SecA (983 aa).

ATP-binding positions include Gln83, 101 to 105 (GEGKT), and Asp489. The segment at 948–983 (ISSEEEDNNEKTNINNNEDLERTKGEAQQTAKNPNE) is disordered. Residues 973-983 (EAQQTAKNPNE) are compositionally biased toward polar residues.

It belongs to the SecA family. Monomer and homodimer. Part of the essential Sec protein translocation apparatus which comprises SecA, SecYEG and auxiliary proteins SecDF. Other proteins may also be involved.

It is found in the cell membrane. The protein resides in the cytoplasm. It catalyses the reaction ATP + H2O + cellular proteinSide 1 = ADP + phosphate + cellular proteinSide 2.. Part of the Sec protein translocase complex. Interacts with the SecYEG preprotein conducting channel. Has a central role in coupling the hydrolysis of ATP to the transfer of proteins into and across the cell membrane, serving as an ATP-driven molecular motor driving the stepwise translocation of polypeptide chains across the membrane. This is Protein translocase subunit SecA from Mesomycoplasma hyopneumoniae (strain 232) (Mycoplasma hyopneumoniae).